The chain runs to 183 residues: uncharacterized protein (183 aa).

Belongs to the asfivirus S183L family.

This is an uncharacterized protein from Ornithodoros (relapsing fever ticks).